The chain runs to 411 residues: Glucose-1-phosphate adenylyltransferase (411 aa).

Residues Gly162, 177–178, and Ser195 contribute to the alpha-D-glucose 1-phosphate site; that span reads EK.

This sequence belongs to the bacterial/plant glucose-1-phosphate adenylyltransferase family. In terms of assembly, homotetramer.

The catalysed reaction is alpha-D-glucose 1-phosphate + ATP + H(+) = ADP-alpha-D-glucose + diphosphate. Its pathway is glycan biosynthesis; glycogen biosynthesis. Involved in the biosynthesis of ADP-glucose, a building block required for the elongation reactions to produce glycogen. Catalyzes the reaction between ATP and alpha-D-glucose 1-phosphate (G1P) to produce pyrophosphate and ADP-Glc. This is Glucose-1-phosphate adenylyltransferase from Thermodesulfovibrio yellowstonii (strain ATCC 51303 / DSM 11347 / YP87).